The chain runs to 316 residues: Protein C4 (316 aa).

This sequence belongs to the poxviridae OPG031 protein family.

The protein localises to the host cytoplasm. The protein resides in the host nucleus. Functionally, plays a role in the inhibition of host NF-kappa-B activation. Mechanistically, blocks the subunit p65/RELA translocation into the host nucleus. The sequence is that of Protein C4 (OPG031) from Vaccinia virus (strain Western Reserve) (VACV).